The chain runs to 243 residues: Ubiquinone biosynthesis O-methyltransferase (243 aa).

Residues R44, G64, D85, and M129 each coordinate S-adenosyl-L-methionine.

The protein belongs to the methyltransferase superfamily. UbiG/COQ3 family.

It catalyses the reaction a 3-demethylubiquinol + S-adenosyl-L-methionine = a ubiquinol + S-adenosyl-L-homocysteine + H(+). It carries out the reaction a 3-(all-trans-polyprenyl)benzene-1,2-diol + S-adenosyl-L-methionine = a 2-methoxy-6-(all-trans-polyprenyl)phenol + S-adenosyl-L-homocysteine + H(+). Its pathway is cofactor biosynthesis; ubiquinone biosynthesis. Its function is as follows. O-methyltransferase that catalyzes the 2 O-methylation steps in the ubiquinone biosynthetic pathway. The chain is Ubiquinone biosynthesis O-methyltransferase from Cronobacter sakazakii (strain ATCC BAA-894) (Enterobacter sakazakii).